Reading from the N-terminus, the 937-residue chain is Lysosomal alpha-glucosidase (937 aa).

The first 23 residues, 1–23 (MMRWPPCSRPLLGVCTLLSLALL), serve as a signal peptide directing secretion. The propeptide occupies 24–60 (GHILLHDLEVVPRELRGFSQDEIHQACQPGASSPECR). The P-type domain occupies 68-118 (TQCDLPPNSRFDCAPDKGITPQQCEARGCCYMPAEWPPDAQMGQPWCFFPP). Disulfide bonds link Cys70–Cys97, Cys80–Cys96, and Cys91–Cys114. N-linked (GlcNAc...) asparagine glycosylation is found at Asn127, Asn220, Asn259, and Asn377. Residue Asp391 coordinates substrate. An N-linked (GlcNAc...) asparagine glycan is attached at Asn457. Asp505 serves as the catalytic Nucleophile. Residue Glu508 is part of the active site. A disulfide bridge links Cys520 with Cys545. Substrate-binding residues include Arg587 and Asp603. Residues Cys634 and Cys645 are joined by a disulfide bond. An N-linked (GlcNAc...) asparagine glycan is attached at Asn639. Position 661 (His661) interacts with substrate. Asn867, Asn888, and Asn910 each carry an N-linked (GlcNAc...) asparagine glycan.

The protein belongs to the glycosyl hydrolase 31 family.

It is found in the lysosome. Its subcellular location is the lysosome membrane. It catalyses the reaction Hydrolysis of terminal, non-reducing (1-&gt;4)-linked alpha-D-glucose residues with release of alpha-D-glucose.. Its function is as follows. Essential for the degradation of glycogen in lysosomes. Has highest activity on alpha-1,4-linked glycosidic linkages, but can also hydrolyze alpha-1,6-linked glucans. The polypeptide is Lysosomal alpha-glucosidase (GAA) (Bos taurus (Bovine)).